Reading from the N-terminus, the 148-residue chain is 15 kDa excretory/secretory protein (148 aa).

The first 19 residues, 1-19, serve as a signal peptide directing secretion; sequence MFFAFAVLLIALATREAYG.

This sequence to T.colubriformis 30 kDa antigenic glycoprotein.

The protein resides in the secreted. The chain is 15 kDa excretory/secretory protein from Haemonchus contortus (Barber pole worm).